The sequence spans 398 residues: 4-hydroxy-3-methylbut-2-en-1-yl diphosphate synthase (ferredoxin) (398 aa).

Residues Cys306, Cys309, Cys340, and Glu347 each coordinate [4Fe-4S] cluster.

It belongs to the IspG family. Requires [4Fe-4S] cluster as cofactor.

The enzyme catalyses (2E)-4-hydroxy-3-methylbut-2-enyl diphosphate + 2 oxidized [2Fe-2S]-[ferredoxin] + H2O = 2-C-methyl-D-erythritol 2,4-cyclic diphosphate + 2 reduced [2Fe-2S]-[ferredoxin] + H(+). It functions in the pathway isoprenoid biosynthesis; isopentenyl diphosphate biosynthesis via DXP pathway; isopentenyl diphosphate from 1-deoxy-D-xylulose 5-phosphate: step 5/6. In terms of biological role, converts 2C-methyl-D-erythritol 2,4-cyclodiphosphate (ME-2,4cPP) into 1-hydroxy-2-methyl-2-(E)-butenyl 4-diphosphate. In Synechococcus sp. (strain CC9605), this protein is 4-hydroxy-3-methylbut-2-en-1-yl diphosphate synthase (ferredoxin).